Reading from the N-terminus, the 510-residue chain is NAD(P)H-quinone oxidoreductase subunit 2 A, chloroplastic (510 aa).

Helical transmembrane passes span L24–L44, I57–F77, I99–I119, M124–C144, L149–Y169, Y183–G203, P227–A247, W295–I315, M323–D343, G347–A367, A395–F415, L418–L438, and M484–I504.

It belongs to the complex I subunit 2 family. NDH is composed of at least 16 different subunits, 5 of which are encoded in the nucleus.

Its subcellular location is the plastid. The protein localises to the chloroplast thylakoid membrane. The catalysed reaction is a plastoquinone + NADH + (n+1) H(+)(in) = a plastoquinol + NAD(+) + n H(+)(out). It carries out the reaction a plastoquinone + NADPH + (n+1) H(+)(in) = a plastoquinol + NADP(+) + n H(+)(out). Functionally, NDH shuttles electrons from NAD(P)H:plastoquinone, via FMN and iron-sulfur (Fe-S) centers, to quinones in the photosynthetic chain and possibly in a chloroplast respiratory chain. The immediate electron acceptor for the enzyme in this species is believed to be plastoquinone. Couples the redox reaction to proton translocation, and thus conserves the redox energy in a proton gradient. This is NAD(P)H-quinone oxidoreductase subunit 2 A, chloroplastic from Platanus occidentalis (Sycamore).